A 25-amino-acid polypeptide reads, in one-letter code: Ocellatin-P1 (25 aa).

L25 carries the post-translational modification Leucine amide.

Expressed by the skin glands.

The protein localises to the secreted. Antibacterial peptide that inhibits reference strains of both Gram-negative bacteria (E.coli, E.cloacae, K.pneumoniae, P.aeruginosa) and Gram-positive bacteria (S.aureus, S.epidermidis, E.faecalis, Streptococcus group B) with relatively low potencies (MIC=25-200 uM). The peptide shows very low hemolytic activity against human erythrocytes. Wheel projection demonstrates the amphipathicity of the alpha-helices is low which may explain the low antibacterial potency. The protein is Ocellatin-P1 of Leptodactylus pentadactylus (Smokey jungle frog).